The chain runs to 227 residues: Adenylate kinase (227 aa).

21–26 serves as a coordination point for ATP; the sequence is GAGKGT. An NMP region spans residues 41–70; that stretch reads ATGDMLRSQVAKQTPLGIEAKKIMDDGKLV. AMP-binding positions include Thr42, Arg47, 68-70, 97-100, and Gln104; these read KLV and GFPR. The segment at 138-175 is LID; the sequence is GRLVHPASGRSYHKVFNPPKTEMKDDITGEDLVQRSDD. ATP-binding positions include Arg139 and 148–149; that span reads SY. Positions 172 and 183 each coordinate AMP. ATP is bound at residue Gln211.

The protein belongs to the adenylate kinase family. AK2 subfamily. Monomer.

Its subcellular location is the cytoplasm. The protein resides in the cytosol. It is found in the mitochondrion intermembrane space. The enzyme catalyses AMP + ATP = 2 ADP. Functionally, catalyzes the reversible transfer of the terminal phosphate group between ATP and AMP. Plays an important role in cellular energy homeostasis and in adenine nucleotide metabolism. Adenylate kinase activity is critical for regulation of the phosphate utilization and the AMP de novo biosynthesis pathways. This chain is Adenylate kinase, found in Kluyveromyces lactis (strain ATCC 8585 / CBS 2359 / DSM 70799 / NBRC 1267 / NRRL Y-1140 / WM37) (Yeast).